A 675-amino-acid chain; its full sequence is MGKIKKKGTSGQAKNYITRTQAVRKLQISLPDFRRLCIFKGIYPREPRNKKKASKTSTPNTTFYYTKDIQYLLHEPLLRKFREQKAVAKKIARSLGRGEVGDAARLEKNHAPKLTLDHVIKERYPTFIDALRDLDDALSLLFLFANLPSTAHVPPKTIALCQRLCHEFQHYLITTNSLRKSFLSIKGIYYQATIQGQDIMWLVPYRFVQRVNGDVDYRIMATFVDFYTTLLGFVNFRLYSSIGLRYPPKFDTRSDENGAELAAFTLEGRGVGDAPKAIEAGNTQATTSTNKEVSKEIQAKVDDVIKSAGLDEAKEEPAAETTEESSETIDKFEPAAPEADTLPQPDLSGSEAGSLFAPFTFYISREAPRAPLEFILRAFGCKRIGWDAVLGDGAFTHDETDTRITHQIVDRPQLPESSLPAIPAASKDGSDAVQKVKPGTRIPGRTYVQPQWVWDCINEGKLVRPDLYAPGATLPPHLSPWVKPSRGGYDPKASLAEQEEEGEAELDEDSDEEMEEAANDKKAEAKADVGSESEDEDESVDGGMDVAGTDDDESESEEEEEDFGGFEEEEAASESEDEEEAARTQHQKELEAEAAGLPFSSNGATSDESKKKASQAKKIAAKKRKEEEELERQKMMMSRKKRKLLEKMIYSNKKQSEEAAKLRSKRRKLEKEATK.

Positions 308 to 317 are enriched in basic and acidic residues; the sequence is AGLDEAKEEP. The segment at 308–330 is disordered; sequence AGLDEAKEEPAAETTEESSETID. Positions 351 to 470 constitute a BRCT domain; sequence EAGSLFAPFT…KLVRPDLYAP (120 aa). A disordered region spans residues 474 to 675; the sequence is LPPHLSPWVK…RRKLEKEATK (202 aa). The segment covering 497–517 has biased composition (acidic residues); that stretch reads EQEEEGEAELDEDSDEEMEEA. The segment covering 518–529 has biased composition (basic and acidic residues); it reads ANDKKAEAKADV. Acidic residues-rich tracts occupy residues 531–540 and 548–580; these read SESEDEDESV and GTDD…DEEE. The stretch at 567–675 forms a coiled coil; that stretch reads EEEEAASESE…RRKLEKEATK (109 aa). The segment covering 581 to 591 has biased composition (basic and acidic residues); the sequence is AARTQHQKELE. The segment covering 612-623 has biased composition (basic residues); it reads KASQAKKIAAKK. Over residues 624–634 the composition is skewed to basic and acidic residues; it reads RKEEEELERQK.

It belongs to the pescadillo family. In terms of assembly, component of the NOP7 complex, composed of erb1, nop7 and ytm1. The complex is held together by erb1, which interacts with nop7 via its N-terminal domain and with ytm1 via a high-affinity interaction between the seven-bladed beta-propeller domains of the 2 proteins. The NOP7 complex associates with the 66S pre-ribosome.

It is found in the nucleus. The protein localises to the nucleolus. The protein resides in the nucleoplasm. In terms of biological role, component of the NOP7 complex, which is required for maturation of the 25S and 5.8S ribosomal RNAs and formation of the 60S ribosome. The sequence is that of Pescadillo homolog (nop7) from Neosartorya fischeri (strain ATCC 1020 / DSM 3700 / CBS 544.65 / FGSC A1164 / JCM 1740 / NRRL 181 / WB 181) (Aspergillus fischerianus).